The following is a 486-amino-acid chain: Transcriptional regulator ERG (486 aa).

Residues 41–54 (TASSSSDYGQTSKM) show a composition bias toward polar residues. Disordered stretches follow at residues 41–62 (TASSSSDYGQTSKMSPRVPQQD) and 79–99 (PSQVNGSRNSPDECSVNKGGK). A phosphoserine mark is found at Ser55, Ser88, and Ser103. The region spanning 120 to 206 (VPPPNMTTNE…SHLHYLRETP (87 aa)) is the PNT domain. The segment at 249 to 311 (QRITTRPDLP…ILGPTSSRLA (63 aa)) is disordered. The segment covering 271–284 (SHLTPQSKAAQPSP) has biased composition (polar residues). Residue Lys289 forms a Glycyl lysine isopeptide (Lys-Gly) (interchain with G-Cter in SUMO2) linkage. The ETS DNA-binding region spans 318–398 (IQLWQFLLEL…HGKRYAYKFD (81 aa)).

It belongs to the ETS family. As to quaternary structure, identified in a IGF2BP1-dependent mRNP granule complex containing untranslated mRNAs. Interacts with SETDB1.

The protein resides in the nucleus. Its subcellular location is the cytoplasm. Functionally, transcriptional regulator. May participate in transcriptional regulation through the recruitment of SETDB1 histone methyltransferase and subsequent modification of local chromatin structure. The sequence is that of Transcriptional regulator ERG (Erg) from Mus musculus (Mouse).